The chain runs to 321 residues: Lipoyl synthase (321 aa).

[4Fe-4S] cluster-binding residues include Cys68, Cys73, Cys79, Cys94, Cys98, Cys101, and Ser308. The 218-residue stretch at 80–297 folds into the Radical SAM core domain; sequence FNHGTATFMI…KEVALELGFT (218 aa).

Belongs to the radical SAM superfamily. Lipoyl synthase family. It depends on [4Fe-4S] cluster as a cofactor.

It localises to the cytoplasm. It carries out the reaction [[Fe-S] cluster scaffold protein carrying a second [4Fe-4S](2+) cluster] + N(6)-octanoyl-L-lysyl-[protein] + 2 oxidized [2Fe-2S]-[ferredoxin] + 2 S-adenosyl-L-methionine + 4 H(+) = [[Fe-S] cluster scaffold protein] + N(6)-[(R)-dihydrolipoyl]-L-lysyl-[protein] + 4 Fe(3+) + 2 hydrogen sulfide + 2 5'-deoxyadenosine + 2 L-methionine + 2 reduced [2Fe-2S]-[ferredoxin]. Its pathway is protein modification; protein lipoylation via endogenous pathway; protein N(6)-(lipoyl)lysine from octanoyl-[acyl-carrier-protein]: step 2/2. In terms of biological role, catalyzes the radical-mediated insertion of two sulfur atoms into the C-6 and C-8 positions of the octanoyl moiety bound to the lipoyl domains of lipoate-dependent enzymes, thereby converting the octanoylated domains into lipoylated derivatives. The sequence is that of Lipoyl synthase from Vibrio parahaemolyticus serotype O3:K6 (strain RIMD 2210633).